The chain runs to 312 residues: MKVAVLGAAGGIGQALALLLKTQLPSGSELSLYDIAPVTPGVAVDLSHIPTAVKIKGFSGEDATPALEGADVVLISAGVARKPGMDRSDLFNVNAGIVKNLVQQVSKTCPKACIGIITNPVNTTVAIAAEVLKKAGVYDKNKLFGVTTLDIIRSNTFVAELKGKQPGEVEVPVIGGHSGVTILPLLSQVPGVSFTEQEVADLTKRIQNAGTEVVEAKAGGGSATLSMGQAAARFGLSLVRALQGEQGVVECAYVEGDGQYARFFSQPLLLGKNGVEERKSIGTLSAFEQNALEGMLDTLKKDIALGEEFVNK.

NAD(+)-binding positions include 7-13 (GAAGGIG) and Asp-34. 2 residues coordinate substrate: Arg-81 and Arg-87. Residues Asn-94 and 117–119 (ITN) each bind NAD(+). Residues Asn-119 and Arg-153 each contribute to the substrate site. The active-site Proton acceptor is the His-177. Position 227 (Met-227) interacts with NAD(+).

Belongs to the LDH/MDH superfamily. MDH type 1 family. As to quaternary structure, homodimer.

It catalyses the reaction (S)-malate + NAD(+) = oxaloacetate + NADH + H(+). Its function is as follows. Catalyzes the reversible oxidation of malate to oxaloacetate. This chain is Malate dehydrogenase, found in Escherichia coli (strain SE11).